A 201-amino-acid polypeptide reads, in one-letter code: Large ribosomal subunit protein uL18 (201 aa).

Belongs to the universal ribosomal protein uL18 family. As to quaternary structure, part of the 50S ribosomal subunit. Contacts the 5S and 23S rRNAs.

Functionally, this is one of the proteins that bind and probably mediate the attachment of the 5S RNA into the large ribosomal subunit, where it forms part of the central protuberance. In Thermococcus gammatolerans (strain DSM 15229 / JCM 11827 / EJ3), this protein is Large ribosomal subunit protein uL18.